The primary structure comprises 459 residues: Protein YTP1 (459 aa).

At 1-6 (MTAANK) the chain is on the extracellular side. A helical membrane pass occupies residues 7–27 (NIVFGFSRSISAILLICFFFE). The Cytoplasmic segment spans residues 28-59 (KVCGDMEHDMGMDDTSGYTRPEIVQAGSKSFH). The chain crosses the membrane as a helical span at residues 60 to 80 (WLCTLGFLLLLPSVVTCLSFA). At 81–82 (GR) the chain is on the extracellular side. The helical transmembrane segment at 83 to 103 (IYSATLLQCTCAVYAFLEAAV) threads the bilayer. At 104–122 (LRFQDNDGVENRTSRGTAW) the chain is on the cytoplasmic side. The chain crosses the membrane as a helical span at residues 123 to 143 (FLVGLTWITLFFGGLAGGTGF). Residues 144-170 (LVKSKRLQTFISNAGEKRLSYIHRGLS) are Extracellular-facing. The chain crosses the membrane as a helical span at residues 171-191 (FLTVLTGWVKVCLAPVALFGF). Residues 192 to 205 (CREAHTGQCIAHGI) lie on the Cytoplasmic side of the membrane. Residues 206 to 226 (MGSAFVLYGFIYVLVLVIPWI) form a helical membrane-spanning segment. Residues 227–266 (RSAQTSYSQDYVDSWVMCIWGVVNTFTEHRWGREGWSVHD) lie on the Extracellular side of the membrane. A helical membrane pass occupies residues 267 to 287 (YQHTFMGIIWWTGGILGIFLS). The Cytoplasmic portion of the chain corresponds to 288–295 (RNGRRTFV). Residues 296 to 316 (PSLIIIFTGWAMSEHAQHLII) form a helical membrane-spanning segment. Topologically, residues 317 to 322 (STKVHN) are extracellular. Residues 323–343 (MFGLVLMCGGALRIIEISFLL) traverse the membrane as a helical segment. Over 344-351 (RDKRTLDK) the chain is Cytoplasmic. The chain crosses the membrane as a helical span at residues 352-372 (IHSFQYLAPFCLVCSGLLFMG). The Extracellular portion of the chain corresponds to 373 to 389 (ANEEQLILVLRLGGDHS). Residues 390-410 (AYVLIIVSGAFLVYFWMIACL) form a helical membrane-spanning segment. Residues 411-459 (EFYLYLLEKGKQGFLPKSYELEEENNNVSFELDNISNEDVDEDTTPFNV) are Cytoplasmic-facing.

The protein resides in the membrane. The chain is Protein YTP1 (YTP1) from Saccharomyces cerevisiae (strain ATCC 204508 / S288c) (Baker's yeast).